The primary structure comprises 510 residues: NAD(P)H-quinone oxidoreductase subunit 2 A, chloroplastic (510 aa).

14 helical membrane passes run 31 to 51, 57 to 77, 99 to 119, 124 to 144, 149 to 169, 184 to 204, 229 to 249, 261 to 281, 295 to 315, 323 to 343, 354 to 374, 395 to 415, 418 to 438, and 484 to 504; these read LIFPECILIFGLILLLMIDLT, IPWLYFISSTSLVMSITALLF, IFQFLILLCSTLCIPLSVEYI, MAITEFLLFVLTATLGGMFLC, LITIFVALECFSLCSYLLSGY, LLMGGASSSILVYGFSWLYGL, ISIALIFITVGIGFKLSLAPF, PTPVVAFLSVTSKVAALALAT, WHLLLEILAILSMILGNLIAI, MLAYSSIGQIGYVIIGIIVGD, YMLFYISMNLGTFACIVLFGL, ALSLALCLLSLGGLPPLAGFF, LYLFWCGWQAGLYFLVLIGLL, and MIVCVIASTILGISMNPIIAI.

Belongs to the complex I subunit 2 family. As to quaternary structure, NDH is composed of at least 16 different subunits, 5 of which are encoded in the nucleus.

The protein resides in the plastid. The protein localises to the chloroplast thylakoid membrane. The catalysed reaction is a plastoquinone + NADH + (n+1) H(+)(in) = a plastoquinol + NAD(+) + n H(+)(out). The enzyme catalyses a plastoquinone + NADPH + (n+1) H(+)(in) = a plastoquinol + NADP(+) + n H(+)(out). Functionally, NDH shuttles electrons from NAD(P)H:plastoquinone, via FMN and iron-sulfur (Fe-S) centers, to quinones in the photosynthetic chain and possibly in a chloroplast respiratory chain. The immediate electron acceptor for the enzyme in this species is believed to be plastoquinone. Couples the redox reaction to proton translocation, and thus conserves the redox energy in a proton gradient. The chain is NAD(P)H-quinone oxidoreductase subunit 2 A, chloroplastic from Nicotiana tabacum (Common tobacco).